The primary structure comprises 208 residues: Holliday junction resolvase RecU (208 aa).

T87, D89, E102, and Q121 together coordinate Mg(2+).

The protein belongs to the RecU family. Requires Mg(2+) as cofactor.

It localises to the cytoplasm. The enzyme catalyses Endonucleolytic cleavage at a junction such as a reciprocal single-stranded crossover between two homologous DNA duplexes (Holliday junction).. In terms of biological role, endonuclease that resolves Holliday junction intermediates in genetic recombination. Cleaves mobile four-strand junctions by introducing symmetrical nicks in paired strands. Promotes annealing of linear ssDNA with homologous dsDNA. Required for DNA repair, homologous recombination and chromosome segregation. In Staphylococcus aureus (strain Mu3 / ATCC 700698), this protein is Holliday junction resolvase RecU.